A 143-amino-acid polypeptide reads, in one-letter code: D-aminoacyl-tRNA deacylase (143 aa).

The Gly-cisPro motif, important for rejection of L-amino acids signature appears at 135–136 (GP).

The protein belongs to the DTD family. As to quaternary structure, homodimer.

The protein localises to the cytoplasm. It carries out the reaction glycyl-tRNA(Ala) + H2O = tRNA(Ala) + glycine + H(+). The enzyme catalyses a D-aminoacyl-tRNA + H2O = a tRNA + a D-alpha-amino acid + H(+). Its function is as follows. An aminoacyl-tRNA editing enzyme that deacylates mischarged D-aminoacyl-tRNAs. Also deacylates mischarged glycyl-tRNA(Ala), protecting cells against glycine mischarging by AlaRS. Acts via tRNA-based rather than protein-based catalysis; rejects L-amino acids rather than detecting D-amino acids in the active site. By recycling D-aminoacyl-tRNA to D-amino acids and free tRNA molecules, this enzyme counteracts the toxicity associated with the formation of D-aminoacyl-tRNA entities in vivo and helps enforce protein L-homochirality. The sequence is that of D-aminoacyl-tRNA deacylase from Mycolicibacterium gilvum (strain PYR-GCK) (Mycobacterium gilvum (strain PYR-GCK)).